We begin with the raw amino-acid sequence, 560 residues long: MKRCGLKLTHDGGVAVLDGRDLVACIEMEKLTNNERYRRIEHTDEIALALHRSGFQPSDIDEYIIDGWDGEVDAWVELLGAAGRVQLKVAPYVEKEPDRANEFTQGFGLNILGRDYTYKSAPHVMGHIASVYCTSPFAIFKQKALCLVWDGSIWPRLYEISDGGIRFINTLFPMIGHAYACAGHHFGPYKNADRTSWKLDLAGKLMSYMSTGTVDSRITAAIQTSYQNNLAGHSPNALSYRRMSANTSVALIQTHRFFEEIGVLVAGAPEHDILATFHYFVERLLIETLRHELARAGRNMSRNLCISGGCGLNIKWNSALRSSGLFRDVWVSPFPNDSGSAIGAACSALVANDGLVPINWSVFSGPHLVKSTPDANWRGSACELSELAALLADGEPVVFLAGRAELGPRALGARSILAPASDRSMKDRLNAAKQREYFRPVAPICLEDRAPEIFEPGSNDRYMLYDHKVREGWRDRVPAIMHLDGSARVQTIARTSAHPVAKLLVEYEKLTNIPLLCNTSANALGRGFFPDVASACTWGRIAKVWAENVLWSNDVDARIP.

It belongs to the NodU/CmcH family.

Its function is as follows. Involved in 6-O-carbamoylation of Nod-factors. The polypeptide is Nodulation protein U (nodU) (Azorhizobium caulinodans (strain ATCC 43989 / DSM 5975 / JCM 20966 / LMG 6465 / NBRC 14845 / NCIMB 13405 / ORS 571)).